The chain runs to 585 residues: Arginine--tRNA ligase (585 aa).

The short motif at 131-141 (ANPTGPMHVGH) is the 'HIGH' region element.

This sequence belongs to the class-I aminoacyl-tRNA synthetase family. Monomer.

The protein resides in the cytoplasm. The catalysed reaction is tRNA(Arg) + L-arginine + ATP = L-arginyl-tRNA(Arg) + AMP + diphosphate. This Chelativorans sp. (strain BNC1) protein is Arginine--tRNA ligase.